A 118-amino-acid chain; its full sequence is Large ribosomal subunit protein bL20 (118 aa).

It belongs to the bacterial ribosomal protein bL20 family.

In terms of biological role, binds directly to 23S ribosomal RNA and is necessary for the in vitro assembly process of the 50S ribosomal subunit. It is not involved in the protein synthesizing functions of that subunit. The sequence is that of Large ribosomal subunit protein bL20 from Lacticaseibacillus casei (strain BL23) (Lactobacillus casei).